Here is a 392-residue protein sequence, read N- to C-terminus: 4-hydroxybenzoate polyprenyltransferase, mitochondrial (392 aa).

The N-terminal 22 residues, 1–22 (MYALRHLRLQSARHFRSSYAAA), are a transit peptide targeting the mitochondrion. Transmembrane regions (helical) follow at residues 90-110 (IGTY…ADAG), 115-135 (LTML…GCTI), 163-183 (FDAI…LVQL), 184-204 (NWQS…YPLM), 207-227 (VTYW…LLGW), 236-256 (LAAC…YDTI), 283-303 (VWLS…GWAC), 307-327 (VPYY…IYSL), and 339-359 (FISN…GTLL). The interval 365–392 (KKQRQSSLTTSTASSYVPALPQKPEVLS) is disordered. The segment covering 369-379 (QSSLTTSTASS) has biased composition (polar residues).

It belongs to the UbiA prenyltransferase family. Mg(2+) serves as cofactor.

The protein localises to the mitochondrion inner membrane. The catalysed reaction is an all-trans-polyprenyl diphosphate + 4-hydroxybenzoate = a 4-hydroxy-3-(all-trans-polyprenyl)benzoate + diphosphate. It functions in the pathway cofactor biosynthesis; ubiquinone biosynthesis. In terms of biological role, catalyzes the prenylation of para-hydroxybenzoate (PHB) with an all-trans polyprenyl group. Mediates the second step in the final reaction sequence of coenzyme Q (CoQ) biosynthesis, which is the condensation of the polyisoprenoid side chain with PHB, generating the first membrane-bound Q intermediate. The sequence is that of 4-hydroxybenzoate polyprenyltransferase, mitochondrial from Drosophila melanogaster (Fruit fly).